Reading from the N-terminus, the 548-residue chain is Probable nuclear hormone receptor HR3 (548 aa).

Positions 1-27 (MNNNQFHELFGSQWPPDQHGGHSSAST) are disordered. Residues 101–176 (IIPCKVCGDK…LGMSRDAVKF (76 aa)) constitute a DNA-binding region (nuclear receptor). 2 consecutive NR C4-type zinc fingers follow at residues 104 to 124 (CKVCGDKSSGVHYGVITCEGC) and 140 to 164 (CPRNKACVVDRVNRNRCQYCRLQKC). The interval 198–228 (MRAQNDAAPDSVYDAQQQTPSSSDQFHGHYN) is disordered. Over residues 211–222 (DAQQQTPSSSDQ) the composition is skewed to polar residues. In terms of domain architecture, NR LBD spans 295–539 (ISKVLVKSLA…PALYKELFSL (245 aa)).

The protein belongs to the nuclear hormone receptor family. NR1 subfamily.

Its subcellular location is the nucleus. In terms of biological role, putative receptor whose ligand is not yet known. The polypeptide is Probable nuclear hormone receptor HR3 (HR3) (Manduca sexta (Tobacco hawkmoth)).